The following is a 121-amino-acid chain: UPF0102 protein BT_2236 (121 aa).

This sequence belongs to the UPF0102 family.

This Bacteroides thetaiotaomicron (strain ATCC 29148 / DSM 2079 / JCM 5827 / CCUG 10774 / NCTC 10582 / VPI-5482 / E50) protein is UPF0102 protein BT_2236.